A 154-amino-acid chain; its full sequence is Small ribosomal subunit protein uS7c (154 aa).

It belongs to the universal ribosomal protein uS7 family. In terms of assembly, part of the 30S ribosomal subunit.

The protein localises to the plastid. It localises to the chloroplast. Its function is as follows. One of the primary rRNA binding proteins, it binds directly to 16S rRNA where it nucleates assembly of the head domain of the 30S subunit. This chain is Small ribosomal subunit protein uS7c (rps7), found in Pleurastrum terricola (Filamentous green alga).